The primary structure comprises 96 residues: Co-chaperonin GroES (96 aa).

This sequence belongs to the GroES chaperonin family. In terms of assembly, heptamer of 7 subunits arranged in a ring. Interacts with the chaperonin GroEL.

It localises to the cytoplasm. Together with the chaperonin GroEL, plays an essential role in assisting protein folding. The GroEL-GroES system forms a nano-cage that allows encapsulation of the non-native substrate proteins and provides a physical environment optimized to promote and accelerate protein folding. GroES binds to the apical surface of the GroEL ring, thereby capping the opening of the GroEL channel. This Holospora obtusa protein is Co-chaperonin GroES.